Reading from the N-terminus, the 292-residue chain is Elongation factor Ts (292 aa).

An involved in Mg(2+) ion dislocation from EF-Tu region spans residues 79–82 (TDFV).

The protein belongs to the EF-Ts family.

The protein localises to the cytoplasm. In terms of biological role, associates with the EF-Tu.GDP complex and induces the exchange of GDP to GTP. It remains bound to the aminoacyl-tRNA.EF-Tu.GTP complex up to the GTP hydrolysis stage on the ribosome. The polypeptide is Elongation factor Ts (Staphylococcus epidermidis (strain ATCC 12228 / FDA PCI 1200)).